A 266-amino-acid chain; its full sequence is Glucosamine-6-phosphate deaminase (266 aa).

The active-site Proton acceptor; for enolization step is the aspartate 72. The active-site For ring-opening step is aspartate 141. The active-site Proton acceptor; for ring-opening step is the histidine 143. Glutamate 148 functions as the For ring-opening step in the catalytic mechanism.

Belongs to the glucosamine/galactosamine-6-phosphate isomerase family. NagB subfamily. In terms of assembly, homohexamer.

It catalyses the reaction alpha-D-glucosamine 6-phosphate + H2O = beta-D-fructose 6-phosphate + NH4(+). It functions in the pathway amino-sugar metabolism; N-acetylneuraminate degradation; D-fructose 6-phosphate from N-acetylneuraminate: step 5/5. Allosterically activated by N-acetylglucosamine 6-phosphate (GlcNAc6P). Its function is as follows. Catalyzes the reversible isomerization-deamination of glucosamine 6-phosphate (GlcN6P) to form fructose 6-phosphate (Fru6P) and ammonium ion. The polypeptide is Glucosamine-6-phosphate deaminase (Erwinia tasmaniensis (strain DSM 17950 / CFBP 7177 / CIP 109463 / NCPPB 4357 / Et1/99)).